The following is a 202-amino-acid chain: Securin (202 aa).

Ala-2 bears the N-acetylalanine mark. A disordered region spans residues 35 to 90 (LDGRSQVSTPRFGKTFDAPPALPKATRKALGTVNRATEKSVKTKGPLKQKQPSFSA). Positions 61 to 64 (RKAL) match the D-box motif. 2 consecutive short sequence motifs (TEK-box) follow at residues 71–73 (TEK) and 94–96 (TEK). Positions 163-173 (PPSPVKMPSPP) match the SH3-binding motif. Phosphoserine; by CDK1 is present on Ser-165.

The protein belongs to the securin family. As to quaternary structure, interacts with RPS10 and DNAJA1. Interacts with the caspase-like ESPL1, and prevents its protease activity probably by covering its active site. Interacts with TP53 and blocks its activity probably by blocking its binding to DNA. Interacts with the Ku 70 kDa subunit of ds-DNA kinase. Interacts with PTTG1IP. In terms of processing, phosphorylated at Ser-165 by CDK1 during mitosis. Post-translationally, phosphorylated in vitro by ds-DNA kinase. Ubiquitinated through 'Lys-11' linkage of ubiquitin moieties by the anaphase promoting complex (APC) at the onset of anaphase, conducting to its degradation. 'Lys-11'-linked ubiquitination is mediated by the E2 ligase UBE2C/UBCH10. Expressed at low level in most tissues, except in adult testis, where it is highly expressed. Overexpressed in many patients suffering from pituitary adenomas, primary epithelial neoplasias, and esophageal cancer.

It localises to the cytoplasm. Its subcellular location is the nucleus. Regulatory protein, which plays a central role in chromosome stability, in the p53/TP53 pathway, and DNA repair. Probably acts by blocking the action of key proteins. During the mitosis, it blocks Separase/ESPL1 function, preventing the proteolysis of the cohesin complex and the subsequent segregation of the chromosomes. At the onset of anaphase, it is ubiquitinated, conducting to its destruction and to the liberation of ESPL1. Its function is however not limited to a blocking activity, since it is required to activate ESPL1. Negatively regulates the transcriptional activity and related apoptosis activity of TP53. The negative regulation of TP53 may explain the strong transforming capability of the protein when it is overexpressed. May also play a role in DNA repair via its interaction with Ku, possibly by connecting DNA damage-response pathways with sister chromatid separation. The sequence is that of Securin (PTTG1) from Homo sapiens (Human).